The chain runs to 145 residues: 3-dehydroquinate dehydratase (145 aa).

Tyrosine 24 serves as the catalytic Proton acceptor. The substrate site is built by asparagine 76, histidine 82, and aspartate 89. Histidine 102 acts as the Proton donor in catalysis. Substrate contacts are provided by residues 103–104 (VS) and arginine 113.

The protein belongs to the type-II 3-dehydroquinase family. As to quaternary structure, homododecamer.

It carries out the reaction 3-dehydroquinate = 3-dehydroshikimate + H2O. It participates in metabolic intermediate biosynthesis; chorismate biosynthesis; chorismate from D-erythrose 4-phosphate and phosphoenolpyruvate: step 3/7. Catalyzes a trans-dehydration via an enolate intermediate. This is 3-dehydroquinate dehydratase from Herminiimonas arsenicoxydans.